Consider the following 378-residue polypeptide: Quinolinate synthase (378 aa).

Iminosuccinate is bound by residues histidine 59 and serine 80. Cysteine 125 is a binding site for [4Fe-4S] cluster. Iminosuccinate is bound by residues 151–153 and serine 168; that span reads YAN. Residue cysteine 212 coordinates [4Fe-4S] cluster. Residues 238-240 and threonine 255 each bind iminosuccinate; that span reads HPE. Cysteine 309 is a [4Fe-4S] cluster binding site.

Belongs to the quinolinate synthase family. Type 1 subfamily. It depends on [4Fe-4S] cluster as a cofactor.

The protein localises to the cytoplasm. It carries out the reaction iminosuccinate + dihydroxyacetone phosphate = quinolinate + phosphate + 2 H2O + H(+). It functions in the pathway cofactor biosynthesis; NAD(+) biosynthesis; quinolinate from iminoaspartate: step 1/1. In terms of biological role, catalyzes the condensation of iminoaspartate with dihydroxyacetone phosphate to form quinolinate. In Burkholderia pseudomallei (strain 668), this protein is Quinolinate synthase.